A 110-amino-acid chain; its full sequence is Glutaredoxin-1 (110 aa).

The Glutaredoxin domain maps to 7–110 (IKHVKDLIAE…EELLEPILAN (104 aa)). Lysine 11 participates in a covalent cross-link: Glycyl lysine isopeptide (Lys-Gly) (interchain with G-Cter in ubiquitin). Glutathione is bound by residues 24–29 (KTYCPY), glutamine 63, valine 75, and 88–89 (ND). An S-glutathionyl cysteine; alternate modification is found at cysteine 27. Cysteines 27 and 30 form a disulfide.

It belongs to the glutaredoxin family.

It is found in the cytoplasm. Its subcellular location is the nucleus. The catalysed reaction is 2 glutathione + H2O2 = glutathione disulfide + 2 H2O. It catalyses the reaction 1-chloro-2,4-dinitrobenzene + glutathione = 2,4-dinitrophenyl-S-glutathione + chloride + H(+). The enzyme catalyses RX + glutathione = an S-substituted glutathione + a halide anion + H(+). Component of the glutathione system which performs several activities such as glutathione-dependent oxidoreductase, glutathione peroxidase and glutathione S-transferase (GST) activity. The disulfide bond functions as an electron carrier in the glutathione-dependent synthesis of deoxyribonucleotides by the enzyme ribonucleotide reductase. In addition, it is also involved in reducing cytosolic protein- and non-protein-disulfides in a coupled system with glutathione reductase. Required for resistance to reactive oxygen species (ROS) by directly reducing hydroperoxides and for the detoxification of ROS-mediated damage. GRX1 is less active as an oxidoreductase than GRX2. The chain is Glutaredoxin-1 (GRX1) from Saccharomyces cerevisiae (strain ATCC 204508 / S288c) (Baker's yeast).